The sequence spans 171 residues: bZIP transcription factor 2 (171 aa).

Residues 1–24 (MASSSSTYRSSSSSDGGNNNPSDS) show a composition bias toward low complexity. The tract at residues 1–54 (MASSSSTYRSSSSSDGGNNNPSDSVVTVDERKRKRMLSNRESARRSRMRKQKHV) is disordered. The region spanning 29 to 92 (DERKRKRMLS…MKIQAENSVL (64 aa)) is the bZIP domain. The tract at residues 31-52 (RKRKRMLSNRESARRSRMRKQK) is basic motif. The tract at residues 57–71 (LTAQINQLSNDNRQI) is leucine-zipper.

Forms heterodimers with BZIP9, BZIP10, BZIP25 and BZIP63. Component of a ternary complex composed of BZIP2-BZIP63 heterodimer and KIN10.

It localises to the nucleus. Functionally, transcription factor that binds to specific DNA sequences in target gene promoters. BZIP2-BZIP63-KIN10 complex binds to the ETFQO promoter to up-regulate its transcription. This Arabidopsis thaliana (Mouse-ear cress) protein is bZIP transcription factor 2.